A 225-amino-acid polypeptide reads, in one-letter code: 7-cyano-7-deazaguanine synthase (225 aa).

Position 10–20 (10–20 (VSGGLDSTTVI)) interacts with ATP. C189, C199, C202, and C205 together coordinate Zn(2+).

It belongs to the QueC family. It depends on Zn(2+) as a cofactor.

The catalysed reaction is 7-carboxy-7-deazaguanine + NH4(+) + ATP = 7-cyano-7-deazaguanine + ADP + phosphate + H2O + H(+). It functions in the pathway purine metabolism; 7-cyano-7-deazaguanine biosynthesis. Functionally, catalyzes the ATP-dependent conversion of 7-carboxy-7-deazaguanine (CDG) to 7-cyano-7-deazaguanine (preQ(0)). This chain is 7-cyano-7-deazaguanine synthase, found in Cellvibrio japonicus (strain Ueda107) (Pseudomonas fluorescens subsp. cellulosa).